We begin with the raw amino-acid sequence, 71 residues long: uncharacterized protein (71 aa).

A helical membrane pass occupies residues 37–57; it reads IGVGVSDGVSAGVGVGVAMII.

The protein localises to the membrane. This is an uncharacterized protein from Dictyostelium discoideum (Social amoeba).